The chain runs to 470 residues: Small ribosomal subunit protein bS1m (470 aa).

Residues 436–470 (FKKIPMTAARLRGRYENSDSPSSPTMSGSSGYGLR) form a disordered region. Positions 453–464 (SDSPSSPTMSGS) are enriched in low complexity.

This sequence belongs to the bacterial ribosomal protein bS1 family. In terms of assembly, component of the mitochondrial small ribosomal subunit (mt-SSU). Mature N.crassa 74S mitochondrial ribosomes consist of a small (37S) and a large (54S) subunit. The 37S small subunit contains a 16S ribosomal RNA (16S mt-rRNA) and 32 different proteins. The 54S large subunit contains a 23S rRNA (23S mt-rRNA) and 42 different proteins.

It localises to the mitochondrion. Functionally, component of the mitochondrial ribosome (mitoribosome), a dedicated translation machinery responsible for the synthesis of mitochondrial genome-encoded proteins, including at least some of the essential transmembrane subunits of the mitochondrial respiratory chain. The mitoribosomes are attached to the mitochondrial inner membrane and translation products are cotranslationally integrated into the membrane. The polypeptide is Small ribosomal subunit protein bS1m (mrp51) (Neurospora crassa (strain ATCC 24698 / 74-OR23-1A / CBS 708.71 / DSM 1257 / FGSC 987)).